The primary structure comprises 270 residues: MYTSTKPDKQNKLKKLIYNEKYHDNCHDYLKTTYLEKYAEPRYKKLLYKIREKIPKVGICEDTVFDDYRNVIVCDQHAVIFGHYNDVFPILATYALNACVGLVMYVPKHKIGALAHIDGLPGYSQESAKEDGLELDFSPVYENIEIMIRYLKQLSGSDESLEITYYLIGGIYGLSEVMVHDILEAINKIQNDKLKFNFMGRNLLGPGNQSRNICIDMATGKITYFDYTINSEYYGKNRKDNVPMNIIRAPRKSEAYLDITYVPISIDDSQ.

It is found in the virion. This is an uncharacterized protein from Acanthamoeba polyphaga (Amoeba).